A 273-amino-acid chain; its full sequence is Large ribosomal subunit protein uL2 (273 aa).

Disordered stretches follow at residues 35 to 54 and 222 to 273; these read DKKD…TRHI and GMAM…RRNK. Residues 229-239 are compositionally biased toward basic and acidic residues; that stretch reads DHPHGGGEGRN. Over residues 253–273 the composition is skewed to basic residues; it reads KGFKTRKNKRTDKYIVRRRNK.

It belongs to the universal ribosomal protein uL2 family. As to quaternary structure, part of the 50S ribosomal subunit. Forms a bridge to the 30S subunit in the 70S ribosome.

Its function is as follows. One of the primary rRNA binding proteins. Required for association of the 30S and 50S subunits to form the 70S ribosome, for tRNA binding and peptide bond formation. It has been suggested to have peptidyltransferase activity; this is somewhat controversial. Makes several contacts with the 16S rRNA in the 70S ribosome. The sequence is that of Large ribosomal subunit protein uL2 from Aeromonas hydrophila subsp. hydrophila (strain ATCC 7966 / DSM 30187 / BCRC 13018 / CCUG 14551 / JCM 1027 / KCTC 2358 / NCIMB 9240 / NCTC 8049).